Reading from the N-terminus, the 479-residue chain is Ribulose bisphosphate carboxylase large chain (479 aa).

Positions 1–2 (MS) are excised as a propeptide. Substrate-binding residues include N123 and T173. Residue K175 is the Proton acceptor of the active site. K177 is a substrate binding site. Mg(2+) is bound by residues K201, D203, and E204. K201 is modified (N6-carboxylysine). The residue at position 208 (S208) is a Phosphoserine. The Proton acceptor role is filled by H294. Residues R295 and H327 each contribute to the substrate site. T330 is subject to Phosphothreonine. S379 serves as a coordination point for substrate.

It belongs to the RuBisCO large chain family. Type I subfamily. As to quaternary structure, heterohexadecamer of 8 large chains and 8 small chains; disulfide-linked. The disulfide link is formed within the large subunit homodimers. Mg(2+) serves as cofactor. In terms of processing, the disulfide bond which can form in the large chain dimeric partners within the hexadecamer appears to be associated with oxidative stress and protein turnover.

It localises to the plastid. The protein localises to the chloroplast. It catalyses the reaction 2 (2R)-3-phosphoglycerate + 2 H(+) = D-ribulose 1,5-bisphosphate + CO2 + H2O. The enzyme catalyses D-ribulose 1,5-bisphosphate + O2 = 2-phosphoglycolate + (2R)-3-phosphoglycerate + 2 H(+). Functionally, ruBisCO catalyzes two reactions: the carboxylation of D-ribulose 1,5-bisphosphate, the primary event in carbon dioxide fixation, as well as the oxidative fragmentation of the pentose substrate in the photorespiration process. Both reactions occur simultaneously and in competition at the same active site. The polypeptide is Ribulose bisphosphate carboxylase large chain (Brassica oleracea (Wild cabbage)).